The sequence spans 199 residues: NAD(P)H dehydrogenase (quinone) (199 aa).

Positions methionine 4 to valine 190 constitute a Flavodoxin-like domain. Residues serine 10–methionine 15 and threonine 78–tyrosine 80 each bind FMN. Tyrosine 12 serves as a coordination point for NAD(+). Tryptophan 98 is a substrate binding site. FMN is bound by residues serine 113 to glycine 119 and histidine 134. The interval glycine 158 to aspartate 181 is disordered. Over residues methionine 163–alanine 177 the composition is skewed to polar residues.

This sequence belongs to the WrbA family. The cofactor is FMN.

The catalysed reaction is a quinone + NADH + H(+) = a quinol + NAD(+). The enzyme catalyses a quinone + NADPH + H(+) = a quinol + NADP(+). This Brucella abortus (strain S19) protein is NAD(P)H dehydrogenase (quinone).